A 349-amino-acid chain; its full sequence is UDP-3-O-acylglucosamine N-acyltransferase (349 aa).

H242 acts as the Proton acceptor in catalysis.

It belongs to the transferase hexapeptide repeat family. LpxD subfamily. In terms of assembly, homotrimer.

The enzyme catalyses a UDP-3-O-[(3R)-3-hydroxyacyl]-alpha-D-glucosamine + a (3R)-hydroxyacyl-[ACP] = a UDP-2-N,3-O-bis[(3R)-3-hydroxyacyl]-alpha-D-glucosamine + holo-[ACP] + H(+). Its pathway is bacterial outer membrane biogenesis; LPS lipid A biosynthesis. Functionally, catalyzes the N-acylation of UDP-3-O-acylglucosamine using 3-hydroxyacyl-ACP as the acyl donor. Is involved in the biosynthesis of lipid A, a phosphorylated glycolipid that anchors the lipopolysaccharide to the outer membrane of the cell. The protein is UDP-3-O-acylglucosamine N-acyltransferase of Cytophaga hutchinsonii (strain ATCC 33406 / DSM 1761 / CIP 103989 / NBRC 15051 / NCIMB 9469 / D465).